Consider the following 2885-residue polypeptide: E3 ubiquitin-protein ligase hyd (2885 aa).

The disordered stretch occupies residues 83 to 138 (SDAKCSTSGGSGTASASKAPSSSRPMARSRARLLRATGRSNSTGQGSGSRSTGVII). Low complexity-rich tracts occupy residues 95–108 (TASA…SRPM) and 116–138 (LRAT…GVII). One can recognise a UBA domain in the interval 154–196 (YVPEELISQAEVVLQGKSRNLIIRELQRTNLDVNLAVNNLLSR). A compositionally biased stretch (low complexity) spans 266 to 276 (ANANAADSNQS). Disordered stretches follow at residues 266–291 (ANAN…TGNS), 580–664 (NNLN…GRKD), and 711–731 (AATS…KEDD). Polar residues-rich tracts occupy residues 277 to 291 (TTRS…TGNS) and 598 to 615 (AMPS…SNSK). 2 positions are modified to phosphoserine: Ser628 and Ser631. Over residues 650–664 (TTKEDSNAPQEGRKD) the composition is skewed to basic and acidic residues. Residues 711 to 722 (AATSSTSNTAST) show a composition bias toward low complexity. Phosphoserine is present on Ser967. The span at 1008–1032 (ASSSNENSSFATMSSSAAGSASSTS) shows a compositional bias: low complexity. The tract at residues 1008–1035 (ASSSNENSSFATMSSSAAGSASSTSRDN) is disordered. The segment at 1217–1285 (DTCSFTWTGA…EKCKCKALIA (69 aa)) adopts a UBR-type zinc-finger fold. At Ser1362 the chain carries Phosphoserine. The disordered stretch occupies residues 1642 to 1761 (NEDGMQDDES…IRSRDTARSS (120 aa)). The span at 1669-1681 (NQSNQEVQRSVQA) shows a compositional bias: polar residues. Residues 1696–1721 (LEDESGDSSAQEEDGSEDGESDDQSD) show a composition bias toward acidic residues. Over residues 1735-1749 (TNSNARSDLAPQTMQ) the composition is skewed to polar residues. At Ser2037 the chain carries Phosphoserine. Positions 2124–2143 (IDSSKTGDGNVTNKAEGSTD) are disordered. Phosphoserine is present on Ser2183. The segment at 2473 to 2492 (NLDARPYTPPNSSDNATPES) is disordered. Residues 2482-2492 (PNSSDNATPES) show a composition bias toward polar residues. The 78-residue stretch at 2484–2561 (SSDNATPESL…AIEIITFKQK (78 aa)) folds into the PABC domain. Ser2574 is modified (phosphoserine). The region spanning 2782 to 2885 (FNDESSEGPD…AIKSKNFGFV (104 aa)) is the HECT domain. Cys2854 acts as the Glycyl thioester intermediate in catalysis.

It belongs to the UBR5 family.

It is found in the nucleus. The protein localises to the cytoplasm. The catalysed reaction is S-ubiquitinyl-[E2 ubiquitin-conjugating enzyme]-L-cysteine + [acceptor protein]-L-lysine = [E2 ubiquitin-conjugating enzyme]-L-cysteine + N(6)-ubiquitinyl-[acceptor protein]-L-lysine.. It participates in protein modification; protein ubiquitination. Its function is as follows. E3 ubiquitin-protein ligase which accepts ubiquitin from an E2 ubiquitin-conjugating enzyme in the form of a thioester and then directly transfers the ubiquitin to targeted substrate. Required for regulation of cell proliferation in imaginal disks and germ cells. Acts as a negative regulator of hh, ci and dpp expression in the anterior of the eye disk. Acts as a positive regulator of the canonical Wnt signaling pathway by mediating ubiquitination and degradation of gro. Catalyzes 'Lys-63'-linked polyubiquitination of akirin, thereby activating the immune deficiency pathway (Imd). The chain is E3 ubiquitin-protein ligase hyd (hyd) from Drosophila melanogaster (Fruit fly).